Here is a 900-residue protein sequence, read N- to C-terminus: Protein translocase subunit SecA (900 aa).

ATP is bound by residues Q87, 105-109 (GEGKT), and D510. Residues 857 to 890 (DSLDSLSDGGSDSADGQEYPKVGRNEPCPCGSGK) form a disordered region. A compositionally biased stretch (low complexity) spans 860–872 (DSLSDGGSDSADG). Residues C884, C886, C895, and H896 each contribute to the Zn(2+) site.

This sequence belongs to the SecA family. In terms of assembly, monomer and homodimer. Part of the essential Sec protein translocation apparatus which comprises SecA, SecYEG and auxiliary proteins SecDF-YajC and YidC. The cofactor is Zn(2+).

It is found in the cell inner membrane. The protein resides in the cytoplasm. It carries out the reaction ATP + H2O + cellular proteinSide 1 = ADP + phosphate + cellular proteinSide 2.. Functionally, part of the Sec protein translocase complex. Interacts with the SecYEG preprotein conducting channel. Has a central role in coupling the hydrolysis of ATP to the transfer of proteins into and across the cell membrane, serving both as a receptor for the preprotein-SecB complex and as an ATP-driven molecular motor driving the stepwise translocation of polypeptide chains across the membrane. The polypeptide is Protein translocase subunit SecA (Marinomonas sp. (strain MWYL1)).